The chain runs to 152 residues: Small ribosomal subunit protein uS13 (152 aa).

This sequence belongs to the universal ribosomal protein uS13 family.

The protein resides in the cytoplasm. In terms of biological role, located at the top of the head of the 40S subunit, it contacts several helices of the 18S rRNA. The protein is Small ribosomal subunit protein uS13 (RPS18) of Branchiostoma belcheri (Amphioxus).